The sequence spans 148 residues: uncharacterized protein (148 aa).

The span at 97 to 112 (KKLDEQRMPGKPKNTE) shows a compositional bias: basic and acidic residues. The interval 97–126 (KKLDEQRMPGKPKNTEGSKSTIRKKANVGN) is disordered.

This is an uncharacterized protein from Caenorhabditis elegans.